Consider the following 160-residue polypeptide: Cytochrome b6-f complex subunit 4 (160 aa).

Transmembrane regions (helical) follow at residues 36–56 (LLYI…GLAV), 95–115 (LLGV…PFLE), and 131–151 (TVFL…ALPI).

The protein belongs to the cytochrome b family. PetD subfamily. In terms of assembly, the 4 large subunits of the cytochrome b6-f complex are cytochrome b6, subunit IV (17 kDa polypeptide, petD), cytochrome f and the Rieske protein, while the 4 small subunits are petG, petL, petM and petN. The complex functions as a dimer.

Its subcellular location is the plastid. It is found in the chloroplast thylakoid membrane. Functionally, component of the cytochrome b6-f complex, which mediates electron transfer between photosystem II (PSII) and photosystem I (PSI), cyclic electron flow around PSI, and state transitions. This Psilotum nudum (Whisk fern) protein is Cytochrome b6-f complex subunit 4.